The sequence spans 160 residues: MAFTFAAFCYMLSLVLCAALIFFAIWHIIAFDELRTDFKSPIDQCNPVHARERLRNIERICFLLRKLVLPEYSIHSLFCIMFLCAQEWLTLGLNVPLLFYHFWRYFHCPADSSELAYDPPVVMNADTLSYCQKEAWCKLAFYLLSFFYYLYCMIYTLVSS.

Over 1 to 10 (MAFTFAAFCY) the chain is Cytoplasmic. Residues 11 to 31 (MLSLVLCAALIFFAIWHIIAF) form a helical membrane-spanning segment. The Lumenal segment spans residues 32–72 (DELRTDFKSPIDQCNPVHARERLRNIERICFLLRKLVLPEY). Residues 73 to 93 (SIHSLFCIMFLCAQEWLTLGL) form a helical membrane-spanning segment. Over 94–138 (NVPLLFYHFWRYFHCPADSSELAYDPPVVMNADTLSYCQKEAWCK) the chain is Cytoplasmic. A helical transmembrane segment spans residues 139 to 159 (LAFYLLSFFYYLYCMIYTLVS). Position 160 (Ser160) is a topological domain, lumenal.

Belongs to the cornichon family. Acts as an auxiliary subunit for AMPA-selective glutamate receptors (AMPARs). Found in a complex with GRIA1, GRIA2, GRIA3, GRIA4, CNIH2, CACNG2, CACNG3, CACNG4, CACNG5, CACNG7 and CACNG8. In terms of tissue distribution, expression is up-regulated in dorsolateral prefrontal cortex of patients with schizophrenia (postmortem brain study).

The protein resides in the postsynaptic cell membrane. Functionally, regulates the trafficking and gating properties of AMPA-selective glutamate receptors (AMPARs). Promotes their targeting to the cell membrane and synapses and modulates their gating properties by regulating their rates of activation, deactivation and desensitization. The protein is Protein cornichon homolog 3 (CNIH3) of Homo sapiens (Human).